The following is a 307-amino-acid chain: Ras-related protein Rab-33 (307 aa).

The disordered stretch occupies residues V19 to A80. 2 stretches are compositionally biased toward pro residues: residues P42 to P56 and P65 to P75. G107–T114 is a GTP binding site. The Effector region motif lies at T129–F137. GTP-binding positions include D155–Q159 and N217–D220. Residues C306 and C307 are each lipidated (S-geranylgeranyl cysteine).

This sequence belongs to the small GTPase superfamily. Rab family.

The protein localises to the cell membrane. The polypeptide is Ras-related protein Rab-33 (rab-33) (Caenorhabditis elegans).